The following is a 352-amino-acid chain: Maleylacetate reductase (352 aa).

Belongs to the iron-containing alcohol dehydrogenase family.

It catalyses the reaction 3-oxoadipate + NAD(+) = maleylacetate + NADH + H(+). It carries out the reaction 3-oxoadipate + NADP(+) = maleylacetate + NADPH + H(+). It participates in aromatic compound metabolism; 3-chlorocatechol degradation. The chain is Maleylacetate reductase (clcE) from Pseudomonas knackmussii (strain DSM 6978 / CCUG 54928 / LMG 23759 / B13).